The sequence spans 561 residues: BTB/POZ domain-containing protein At2g46260 (561 aa).

Disordered stretches follow at residues 1–31 (MRGS…EGDF) and 100–119 (LTDN…NLDD). Residues 17–28 (DSNFSRHGSSSE) are compositionally biased toward polar residues. Residues 107 to 119 (DMDDAPGGDNLDD) show a composition bias toward acidic residues. The BTB domain occupies 143 to 212 (IDCSTVVRVK…MYSNSLSVTT (70 aa)). Residues 266-358 (QPLTDAAKQF…YMTCRKLKKV (93 aa)) enclose the BACK domain.

It participates in protein modification; protein ubiquitination. Functionally, may act as a substrate-specific adapter of an E3 ubiquitin-protein ligase complex (CUL3-RBX1-BTB) which mediates the ubiquitination and subsequent proteasomal degradation of target proteins. This Arabidopsis thaliana (Mouse-ear cress) protein is BTB/POZ domain-containing protein At2g46260.